A 406-amino-acid chain; its full sequence is Digeranylgeranylglycerophospholipid reductase 2 (406 aa).

Residues Gly-15, Glu-34, Cys-45, Ala-46, Gly-48, Arg-99, Ala-123, Asp-279, Gly-291, and Ile-292 each coordinate FAD.

The protein belongs to the geranylgeranyl reductase family. DGGGPL reductase subfamily. FAD is required as a cofactor.

It carries out the reaction a 2,3-bis-O-phytanyl-sn-glycerol 1-phospholipid + 8 oxidized 2[4Fe-4S]-[ferredoxin] = a 2,3-bis-O-(geranylgeranyl)-sn-glycerol 1-phospholipid + 8 reduced 2[4Fe-4S]-[ferredoxin] + 16 H(+). It catalyses the reaction 2,3-bis-O-(phytanyl)-sn-glycerol 1-phosphate + 8 oxidized 2[4Fe-4S]-[ferredoxin] = 2,3-bis-O-(geranylgeranyl)-sn-glycerol 1-phosphate + 8 reduced 2[4Fe-4S]-[ferredoxin] + 16 H(+). The catalysed reaction is a 2,3-bis-O-phytanyl-sn-glycerol 1-phospholipid + 8 A = a 2,3-bis-O-(geranylgeranyl)-sn-glycerol 1-phospholipid + 8 AH2. The enzyme catalyses CDP-2,3-bis-O-(geranylgeranyl)-sn-glycerol + 8 AH2 = CDP-2,3-bis-O-(phytanyl)-sn-glycerol + 8 A. It carries out the reaction archaetidylserine + 8 AH2 = 2,3-bis-O-phytanyl-sn-glycero-3-phospho-L-serine + 8 A. Its pathway is membrane lipid metabolism; glycerophospholipid metabolism. Is involved in the reduction of 2,3-digeranylgeranylglycerophospholipids (unsaturated archaeols) into 2,3-diphytanylglycerophospholipids (saturated archaeols) in the biosynthesis of archaeal membrane lipids. Catalyzes the formation of archaetidic acid (2,3-di-O-phytanyl-sn-glyceryl phosphate) from 2,3-di-O-geranylgeranylglyceryl phosphate (DGGGP) via the hydrogenation of each double bond of the isoprenoid chains. Is also probably able to reduce double bonds of geranyl groups in CDP-2,3-bis-O-(geranylgeranyl)-sn-glycerol and archaetidylserine, thus acting at various stages in the biosynthesis of archaeal membrane lipids. The chain is Digeranylgeranylglycerophospholipid reductase 2 from Methanococcoides burtonii (strain DSM 6242 / NBRC 107633 / OCM 468 / ACE-M).